Here is a 536-residue protein sequence, read N- to C-terminus: Chaperonin GroEL 1 (536 aa).

ATP contacts are provided by residues 29–32, 86–90, glycine 413, 476–478, and aspartate 492; these read TLGP, DGTTT, and NAA.

The protein belongs to the chaperonin (HSP60) family. Forms a cylinder of 14 subunits composed of two heptameric rings stacked back-to-back. Interacts with the co-chaperonin GroES.

It localises to the cytoplasm. The enzyme catalyses ATP + H2O + a folded polypeptide = ADP + phosphate + an unfolded polypeptide.. Together with its co-chaperonin GroES, plays an essential role in assisting protein folding. The GroEL-GroES system forms a nano-cage that allows encapsulation of the non-native substrate proteins and provides a physical environment optimized to promote and accelerate protein folding. This is Chaperonin GroEL 1 from Nocardia farcinica (strain IFM 10152).